A 488-amino-acid polypeptide reads, in one-letter code: Histamine H1 receptor (488 aa).

Over 1-29 the chain is Extracellular; it reads MSLPNTSSASEDKMCEGNRTAMASPQLLP. Asparagine 5 and asparagine 18 each carry an N-linked (GlcNAc...) asparagine glycan. A helical transmembrane segment spans residues 30 to 50; it reads LVVVLSSISLVTVGLNLLVLY. At 51–64 the chain is on the cytoplasmic side; sequence AVRSERKLHTVGNL. A helical membrane pass occupies residues 65–89; the sequence is YIVSLSVADLIVGAVVMPMNILYLI. Topologically, residues 90–97 are extracellular; it reads MTKWSLGR. A helical membrane pass occupies residues 98 to 123; sequence PLCLFWLSMDYVASTASIFSVFILCI. An intrachain disulfide couples cysteine 100 to cysteine 180. Aspartate 107 and threonine 112 together coordinate histamine. The tract at residues 107 to 112 is important for agonist binding; it reads DYVAST. At 124-144 the chain is on the cytoplasmic side; sequence DRYRSVQQPLRYLRYRTKTRA. A phosphothreonine mark is found at threonine 140 and threonine 142. A helical transmembrane segment spans residues 145–164; sequence SATILGAWFLSFLWVIPILG. Over 165–188 the chain is Extracellular; that stretch reads WHHFTPLAPELREDKCETDFYNVT. The chain crosses the membrane as a helical span at residues 189-211; that stretch reads WFKIMTAIINFYLPTLLMLWFYV. Asparagine 198 provides a ligand contact to histamine. Residues 212–417 lie on the Cytoplasmic side of the membrane; sequence KIYKAVRRHC…LNRERKAAKQ (206 aa). Serine 230 bears the Phosphoserine mark. Residues 245-337 are disordered; it reads KEGAKKPGKE…SQPKMDEQSL (93 aa). Positions 322–337 are enriched in polar residues; it reads ANDQTLSQPKMDEQSL. Phosphoserine occurs at positions 344, 347, 381, 383, 397, and 399. Residues 418 to 441 traverse the membrane as a helical segment; it reads LGCIMAAFILCWIPYFIFFMVIAF. The tract at residues 425-429 is important for agonist binding; sequence FILCW. Residue tyrosine 432 coordinates histamine. Cysteine 442 and cysteine 445 are disulfide-bonded. Residues 442–447 are Extracellular-facing; sequence CNSCCS. A helical transmembrane segment spans residues 448-470; the sequence is EPVHMFTIWLGYINSTLNPLIYP. The Cytoplasmic segment spans residues 471 to 488; sequence LCNENFKKTFKKILHIRS.

It belongs to the G-protein coupled receptor 1 family. In terms of processing, phosphorylation at sites in the second and third cytoplasmic loops independently contribute to agonist-induced receptor down-regulation.

It localises to the cell membrane. In terms of biological role, G-protein-coupled receptor for histamine, a biogenic amine that functions as an immune modulator and a neurotransmitter. Through the H1 receptor, histamine mediates the contraction of smooth muscles and increases capillary permeability due to contraction of terminal venules. Also mediates neurotransmission in the central nervous system and thereby regulates circadian rhythms, emotional and locomotor activities as well as cognitive functions. This Mus musculus (Mouse) protein is Histamine H1 receptor.